Here is a 690-residue protein sequence, read N- to C-terminus: MMLNKKVVALCTLTLHLFCIFLCLGKEVRSEENGKIQDDAKKIVSELRFLEKVEDVIEKSNIGGNEVDADENSFNPDTEVPIEEIEEIKMRELKDVKEEKNKNDNHNNNNNNNNISSSSSSSSNTFGEEKEEVSKKKKKLRLIVSENHATTPSFFQESLLEPDVLSFLESKGNLSNLKNINSMIIELKEDTTDDELISYIKILEEKGALIESDKLVSADNIDISGIKDAIRRGEENIDVNDYKSMLEVENDAEDYDKMFGMFNESHAATSKRKRHSTNERGYDTFSSPSYKTYSKSDYLYDDDNNNNNYYYSHSSNGHNSSSRNSSSSRSRPGKYHFNDEFRNLQWGLDLSRLDETQELINEHQVMSTRICVIDSGIDYNHPDLKDNIELNLKELHGRKGFDDDNNGIVDDIYGANFVNNSGNPMDDNYHGTHVSGIISAIGNNNIGVVGVDVNSKLIICKALDEHKLGRLGDMFKCLDYCISRNAHMINGSFSFDEYSGIFNSSVEYLQRKGILFFVSASNCSHPKSSTPDIRKCDLSINAKYPPILSTVYDNVISVANLKKNDNNNHYSLSINSFYSNKYCQLAAPGTNIYSTAPHNSYRKLNGTSMAAPHVAAIASLIFSINPDLSYKKVIQILKDSIVYLPSLKNMVAWAGYADINKAVNLAIKSKKTYINSNISNKWKKKSRYLH.

The N-terminal stretch at 1-25 is a signal peptide; the sequence is MMLNKKVVALCTLTLHLFCIFLCLG. Positions 26-219 are cleaved as a propeptide — inhibition peptide; sequence KEVRSEENGK…IESDKLVSAD (194 aa). The segment at 99 to 131 is disordered; it reads EKNKNDNHNNNNNNNNISSSSSSSSNTFGEEKE. Residues 106–124 show a composition bias toward low complexity; sequence HNNNNNNNNISSSSSSSSN. A glycan (N-linked (GlcNAc...) asparagine) is linked at Asn-114. Asn-147, Thr-150, and Pro-152 together coordinate Ca(2+). Asn-173 carries an N-linked (GlcNAc...) asparagine glycan. Ca(2+) is bound at residue Gly-207. Residue Asn-263 is glycosylated (N-linked (GlcNAc...) asparagine). 2 disordered regions span residues 266-286 and 305-334; these read HAAT…DTFS and NNNN…RPGK. Residues 305–330 are compositionally biased toward low complexity; it reads NNNNYYYSHSSNGHNSSSRNSSSSRS. Residues Asn-319 and Asn-324 are each glycosylated (N-linked (GlcNAc...) asparagine). Glu-340 contributes to the Ca(2+) binding site. One can recognise a Peptidase S8 domain in the interval 345 to 663; sequence QWGLDLSRLD…AGYADINKAV (319 aa). Cystine bridges form between Cys-371–Cys-481 and Cys-460–Cys-477. Asp-374 functions as the Charge relay system in the catalytic mechanism. Asp-383, Glu-394, Arg-398, Phe-401, Asp-402, Asp-403, Asp-404, Asn-406, Ile-408, Asp-410, and Asp-411 together coordinate Ca(2+). A glycan (N-linked (GlcNAc...) asparagine) is linked at Asn-419. Catalysis depends on His-430, which acts as the Charge relay system. Residues Ile-441, Asn-444, Ile-446, and Val-448 each coordinate Ca(2+). 3 N-linked (GlcNAc...) asparagine glycosylation sites follow: Asn-490, Asn-503, and Asn-522. Cys-523 and Cys-536 form a disulfide bridge. The N-linked (GlcNAc...) asparagine glycan is linked to Asn-605. Ser-608 acts as the Charge relay system in catalysis. Asn-677 carries N-linked (GlcNAc...) asparagine glycosylation.

The protein belongs to the peptidase S8 family. As to quaternary structure, heterodimer between p54 form and prodomain p31; the interaction inhibits p54 catalytic activity. Heterodimer p31-p54 is monomeric at basic pH and dimeric at acidic pH; dimerization is driven by the N-terminal prodomain (p31). Ca(2+) serves as cofactor. Post-translationally, the prodomain (p31) is cleaved, probably by autocatalysis, during the transport to or in the Golgi apparatus, and remains non-covalently associated with the p54 form as an inhibitor. p54 is further cleaved into the p47 form. This cleavage is likely occurring in the exoneme prior to egress and is mediated by PMX/plasmepsin X. The p54-to-p47 conversion can be also autocatalytic. Heterodimer p31-p54 is activated by cleavage of prodomain (p31) by the aspartic protease PMX; cleavage by PMX abolishes inhibitory capacity of p31. Primary autocatalytic processing of SUB1 is essential for parasite growth; the p54-to-p47 conversion is dispensable for SUB1 functions in the parasites. The disulfide bond between Cys-523 and Cys-536 acts as a redox-sensitive disulfide switch. The oxidized form is required for catalytic activity. In terms of processing, the relevance of N-glycosylation is not clear. In an insect expression system, SUB1 glycosylation appears to affect its processing into the active mature form suggesting that SUB1 may not be N-glycosylated in parasites.

It localises to the secreted. Its subcellular location is the parasitophorous vacuole lumen. It carries out the reaction Hydrolysis of proteins with broad specificity for peptide bonds, and a preference for a large uncharged residue in P1. Hydrolyzes peptide amides.. With respect to regulation, p54 and probably p47 forms are inhibited by the non-covalent interaction with the cleaved propeptide. Inhibited by subtilisin propeptide-like protein SUB1-ProM. Inhibited by 3,4-dichloroisocoumarin (DCI) and 4-(hydroxymercuri)benzoic acid (pHMB). Partially inhibited by chymostatin, leupeptin, phenylmethylsulfonyl fluoride (PMSF), and 4-(2-aminoethyl)benzenesulfonyl fluoride. Functionally, serine protease which plays an essential role in merozoite invasion of and egress from host erythrocytes by processing and activating various merozoite surface and parasitophorous vacuole proteins. Mediates the proteolytic maturation of serine proteases SERA4, SERA5 and SERA6 just prior to merozoite egress. Prior to merozoite egress, cleaves merozoite surface proteins MSP1, MSP6 and MSP7, which form the MSP1/6/7 complex, and thereby may prime the parasite cell surface for invasion of fresh erythrocytes. Prior to merozoite egress, cleaves MSRP2 converting it to MSRP2 p25 form, and RAP1 converting it to RAP1 p67 form. This Plasmodium falciparum protein is Subtilisin-like protease 1.